The sequence spans 309 residues: ATP synthase gamma chain (309 aa).

Belongs to the ATPase gamma chain family. As to quaternary structure, F-type ATPases have 2 components, CF(1) - the catalytic core - and CF(0) - the membrane proton channel. CF(1) has five subunits: alpha(3), beta(3), gamma(1), delta(1), epsilon(1). CF(0) has three main subunits: a, b and c.

It localises to the cell membrane. Functionally, produces ATP from ADP in the presence of a proton gradient across the membrane. The gamma chain is believed to be important in regulating ATPase activity and the flow of protons through the CF(0) complex. The protein is ATP synthase gamma chain of Mycolicibacterium gilvum (strain PYR-GCK) (Mycobacterium gilvum (strain PYR-GCK)).